Here is a 184-residue protein sequence, read N- to C-terminus: ATP synthase subunit delta (184 aa).

This sequence belongs to the ATPase delta chain family. As to quaternary structure, F-type ATPases have 2 components, F(1) - the catalytic core - and F(0) - the membrane proton channel. F(1) has five subunits: alpha(3), beta(3), gamma(1), delta(1), epsilon(1). F(0) has three main subunits: a(1), b(2) and c(10-14). The alpha and beta chains form an alternating ring which encloses part of the gamma chain. F(1) is attached to F(0) by a central stalk formed by the gamma and epsilon chains, while a peripheral stalk is formed by the delta and b chains.

The protein resides in the cell inner membrane. F(1)F(0) ATP synthase produces ATP from ADP in the presence of a proton or sodium gradient. F-type ATPases consist of two structural domains, F(1) containing the extramembraneous catalytic core and F(0) containing the membrane proton channel, linked together by a central stalk and a peripheral stalk. During catalysis, ATP synthesis in the catalytic domain of F(1) is coupled via a rotary mechanism of the central stalk subunits to proton translocation. Its function is as follows. This protein is part of the stalk that links CF(0) to CF(1). It either transmits conformational changes from CF(0) to CF(1) or is implicated in proton conduction. This chain is ATP synthase subunit delta, found in Caulobacter vibrioides (strain NA1000 / CB15N) (Caulobacter crescentus).